A 399-amino-acid polypeptide reads, in one-letter code: Tyrosine--tRNA ligase (399 aa).

Positions 42–51 match the 'HIGH' region motif; sequence PTAPDIHLGH. A 'KMSKS' region motif is present at residues 226 to 230; that stretch reads KMSKS. ATP is bound at residue Lys-229. Residues 337-398 form the S4 RNA-binding domain; the sequence is LTIGYILQRA…GKRRFAKVKV (62 aa).

This sequence belongs to the class-I aminoacyl-tRNA synthetase family. TyrS type 2 subfamily. In terms of assembly, homodimer.

Its subcellular location is the cytoplasm. The enzyme catalyses tRNA(Tyr) + L-tyrosine + ATP = L-tyrosyl-tRNA(Tyr) + AMP + diphosphate + H(+). In terms of biological role, catalyzes the attachment of tyrosine to tRNA(Tyr) in a two-step reaction: tyrosine is first activated by ATP to form Tyr-AMP and then transferred to the acceptor end of tRNA(Tyr). This chain is Tyrosine--tRNA ligase, found in Coxiella burnetii (strain RSA 493 / Nine Mile phase I).